The sequence spans 680 residues: DNA-directed RNA polymerase subunit beta' (680 aa).

Residues C69, C71, C87, and C90 each contribute to the Zn(2+) site. Mg(2+) is bound by residues D489, D491, and D493.

This sequence belongs to the RNA polymerase beta' chain family. RpoC1 subfamily. In terms of assembly, in plastids the minimal PEP RNA polymerase catalytic core is composed of four subunits: alpha, beta, beta', and beta''. When a (nuclear-encoded) sigma factor is associated with the core the holoenzyme is formed, which can initiate transcription. It depends on Mg(2+) as a cofactor. Zn(2+) is required as a cofactor.

It localises to the plastid. Its subcellular location is the chloroplast. The catalysed reaction is RNA(n) + a ribonucleoside 5'-triphosphate = RNA(n+1) + diphosphate. In terms of biological role, DNA-dependent RNA polymerase catalyzes the transcription of DNA into RNA using the four ribonucleoside triphosphates as substrates. In Aethionema grandiflorum (Persian stone-cress), this protein is DNA-directed RNA polymerase subunit beta'.